The primary structure comprises 103 residues: Ig kappa-b4 chain C region (103 aa).

The Ig-like domain maps to 5 to 95 (PTVLIFPPAA…KVTQGTTSVV (91 aa)). A disulfide bridge connects residues Cys26 and Cys85.

The sequence is that of Ig kappa-b4 chain C region from Oryctolagus cuniculus (Rabbit).